The chain runs to 413 residues: uncharacterized protein (413 aa).

4 helical membrane-spanning segments follow: residues 22-42 (VLLV…TLIL), 270-290 (IIYV…ISIC), 312-332 (ILIQ…GNLI), and 379-399 (LIII…YPIY).

Belongs to the ABC-4 integral membrane protein family. LolC/E subfamily.

It localises to the cell membrane. This is an uncharacterized protein from Buchnera aphidicola subsp. Schizaphis graminum (strain Sg).